Consider the following 314-residue polypeptide: Glyceraldehyde-3-phosphate dehydrogenase A, chloroplastic (314 aa).

Residues 5–6 (RI), D29, and R74 each bind NADP(+). A disulfide bridge links C13 with C283. D-glyceraldehyde 3-phosphate is bound by residues 147 to 149 (SCT), T178, R193, 206 to 207 (TG), and R229. Catalysis depends on C148, which acts as the Nucleophile. N311 is an NADP(+) binding site.

Belongs to the glyceraldehyde-3-phosphate dehydrogenase family. As to quaternary structure, homotetramer.

The protein resides in the plastid. It is found in the chloroplast. The enzyme catalyses D-glyceraldehyde 3-phosphate + phosphate + NADP(+) = (2R)-3-phospho-glyceroyl phosphate + NADPH + H(+). Its pathway is carbohydrate biosynthesis; Calvin cycle. This chain is Glyceraldehyde-3-phosphate dehydrogenase A, chloroplastic (GapA), found in Scenedesmus vacuolatus (Green alga).